The chain runs to 193 residues: Probable chorismate pyruvate-lyase (193 aa).

Residues Arg-81, Leu-119, and Glu-177 each coordinate substrate.

This sequence belongs to the UbiC family.

The protein localises to the cytoplasm. It catalyses the reaction chorismate = 4-hydroxybenzoate + pyruvate. Its pathway is cofactor biosynthesis; ubiquinone biosynthesis. Removes the pyruvyl group from chorismate, with concomitant aromatization of the ring, to provide 4-hydroxybenzoate (4HB) for the ubiquinone pathway. This chain is Probable chorismate pyruvate-lyase, found in Idiomarina loihiensis (strain ATCC BAA-735 / DSM 15497 / L2-TR).